The primary structure comprises 311 residues: Ribosomal protein L11 methyltransferase (311 aa).

Thr-163, Gly-184, Asp-206, and Asn-248 together coordinate S-adenosyl-L-methionine.

It belongs to the methyltransferase superfamily. PrmA family.

Its subcellular location is the cytoplasm. It catalyses the reaction L-lysyl-[protein] + 3 S-adenosyl-L-methionine = N(6),N(6),N(6)-trimethyl-L-lysyl-[protein] + 3 S-adenosyl-L-homocysteine + 3 H(+). Its function is as follows. Methylates ribosomal protein L11. This Clostridium acetobutylicum (strain ATCC 824 / DSM 792 / JCM 1419 / IAM 19013 / LMG 5710 / NBRC 13948 / NRRL B-527 / VKM B-1787 / 2291 / W) protein is Ribosomal protein L11 methyltransferase.